The primary structure comprises 238 residues: DNA repair protein RecO (238 aa).

Belongs to the RecO family.

Its function is as follows. Involved in DNA repair and RecF pathway recombination. In Cereibacter sphaeroides (strain ATCC 17023 / DSM 158 / JCM 6121 / CCUG 31486 / LMG 2827 / NBRC 12203 / NCIMB 8253 / ATH 2.4.1.) (Rhodobacter sphaeroides), this protein is DNA repair protein RecO.